Reading from the N-terminus, the 716-residue chain is Leucine-rich repeat neuronal protein 1 (716 aa).

The signal sequence occupies residues 1–25 (MARLSTGKAACQVVLGLLITSLTES). The 47-residue stretch at 26–72 (SILTSECPQLCVCEIRPWFTPQSTYREATTVDCNDLRLTRIPGNLSS) folds into the LRRNT domain. At 26–631 (SILTSECPQL…DISDHETSTA (606 aa)) the chain is on the extracellular side. An N-linked (GlcNAc...) asparagine glycan is attached at N69. LRR repeat units follow at residues 73–95 (DTQV…QQLF), 96–117 (NLTE…GLAN), 120–141 (QLTT…CLQD), 144–165 (NLQE…AFSG), 168–189 (NLLR…WFDS), 192–213 (NLEI…NFRP), 216–237 (NLRS…ALVG), 240–261 (SLES…ALQK), and 264–285 (NLKF…DFKN). Residues N96 and N117 are each glycosylated (N-linked (GlcNAc...) asparagine). Residues 371–424 (NPLRCDCVIHWINSNKTNIRFMEPLSMFCAMPPEYRGQQVKEVLIQDSSEQCLP) enclose the LRRCT domain. The N-linked (GlcNAc...) asparagine glycan is linked to N385. In terms of domain architecture, Ig-like C2-type spans 424-515 (PMISHDTFPN…GADTRVATIK (92 aa)). C447 and C499 are joined by a disulfide. A glycan (N-linked (GlcNAc...) asparagine) is linked at N517. The Fibronectin type-III domain occupies 525-619 (QVLKIYVKQT…VNVTTKTAAF (95 aa)). The helical transmembrane segment at 632–652 (LAAVMGSMFAVISLASIAIYI) threads the bilayer. Topologically, residues 653-716 (AKRFKRKNYH…VDTSRSYYMW (64 aa)) are cytoplasmic. The segment at 692-716 (SDKDKDGSADTKPTQVDTSRSYYMW) is disordered. Polar residues predominate over residues 702–716 (TKPTQVDTSRSYYMW).

Expressed in brain.

It localises to the membrane. This chain is Leucine-rich repeat neuronal protein 1 (Lrrn1), found in Mus musculus (Mouse).